A 1934-amino-acid chain; its full sequence is MDSTSFLPTFLDVDLTISHIKCLPKDILVKFQGIKSNECEFDYHVLQREIQHTPKVKNNVEIDEFCLVEERVSGEWQRGRVMEKKNELYTVLLIDRGEELRVAGPQIASACGNLFELPPRVVFGIFANILPVGEKWSPKALNYFKSLVGIQVKGYVQAILPLQMFLFEVPKIISQALELQLGRLVDGDSFRLIVEMLEEFPQQMPDLLQHKRPELSLGNKDTSLDIQHVLDKLQPSLSVGSTESVKVSSALSPSKFYCQLIKWTPELENLTAHMTLHYDTVCQETSPTCDNFGLLCVARRRNGQWHRGILQQLLPPNQVKIWFMDYGSSEAIPSIYVKKLKQDFILVPLFSFPCSLTCLHSPDRDARIFQLSIFKQALLGQVVYAHIDWFNKDECLYYVTLQTQESTVNSKCLLKTVGTQVLCPMSDSKISNILSETSVSDVNSFAVESFMGNIEWSIDSLNKKGILKVGFPIKTVQMEIEAAYIAFIAYVLNPSNFWVRTNDHRNEFQEIMKNINKFYDLCENDEMILRKPEPGLFCCARYSKDRRFYRAVITEINGYKINVYFLDYGNTDSIPFFDVKILLPEFCELPALAMCCSLAHIFPVEDLWTKAAIDYFKKLVLNKAILLQVIAKKDDKYTVNIQSVEASENIDVISLMLQAGYAEYFQVELEYFPKSVSEYSMLNSESKNKVNIKKVISALLEGPKSKKYHSNNLVENNLSLPKSLAVNISEFKNPFTLSVGPESSWPYKEYIFRPGTVLEVKCSCYYGPGDFSCQLQCKSEDLKLLMEQIQNYYSIHSDPYEIGQTACVAKYSGKWCRAAVLTQVSKEVDIVFVDYGYQKRVLIEDLCAINPRFLLLESQAFRCCLNHFIEPVSCKLFSWTRKAFRDLWNFISSSRGLLTCIIYALVIIHPNHLYNLVDLQSSFTSAKEFLMNRGSAQYITLSETFPSLFSLYSYCYSSFNIQIGSEEEVYISHIYSPQKFYCQLGRNNKDLEMIETKITESVNLQNFPKYDSNKMRVCISKYVEDGLSYRALAIPTDSSSEFQVYFVDFGNKQLVGENMLRAISAQFPELLFTPMQAIKCFLSDLRDVDIPAEISSWFKDNFLGRSLKAIILSQESDGQLGIELYDGSQYINEKIKVLLHAYGKRHCDQACCMEKSNKINENKRFTTSLKGKTGNNYRHNVINKPSPVTYSERKIDQLMHPKNIHARFLKPSVCYKMEPVSKNKMKTSLNDGLKGIKIVPGAAHILENRRVGQKSVKVVSQSFIRALNQTTSQNPYDLIRPQIKDLPQPQIYLNAKVKGYVSNISNPANFHIQLAENESVIIRLADALNATARRLRERKSVKPLVGDLVVAEYSGDNAIYRAVIKKILPGNSFEVEFIDYGNSAIVNTSKIYELQREFLTVPQLGIHAFLSGVKWNEPDEIWDDKTVDYFTSKVHNKTVYCEFLKKHDQKWEVNMICDEKCVINELLKWKACSKLQKSALQMPQVLSQKVRPGDNEMKKGKSNESEGSMNSNQQLFKIPLEEFKLGQLEKAEMLNVSKSGRFYVKLSKNKKILSDLIVLITKEEKKSPFLSMESIEKGLECLAKSKNTLKWHRSKVEEKYVDDKVLVFLVDCGIYEIVPVCNTKLLSNEIRNIPRQAVPCKWIWFENSKNISFECLFADLEINILFLKYLDAVWEVEILVDDLLLLEYLNLNTVPVEENKLRLAEIVYNIESKTPVSSCTIKSFTWVQFQNDRQYSGIATAVSDPSDFSIQLEDFFDIMKYLFMLLSDLPETLQTLPQEFIIPGSSCLFKYKSEDQWNRVEISEVSPQSLCLVLVDYGFSFYIRYSEIINLKVVPEELLNLPRLSYPCILYGILPAKGKHWSEEAKIFFRDFLSKPDLVFQFREYHSETKLKVDVIHEKNNLADILVASGLATYSKDSPHLDAITATESAKNPI.

6 Tudor domains span residues 59–117 (NVEI…LFEL), 289–347 (CDNF…FILV), 531–589 (KPEP…FCEL), 799–856 (PYEI…FLLL), 1011–1070 (DSNK…FPEL), and 1342–1401 (KPLV…FLTV). Residues 1490 to 1510 (VRPGDNEMKKGKSNESEGSMN) are disordered. Residues 1491-1504 (RPGDNEMKKGKSNE) show a composition bias toward basic and acidic residues. Tudor domains lie at 1574–1633 (SIEK…IRNI) and 1780–1838 (FIIP…PEEL).

The sequence is that of Tudor domain-containing protein 15 (TDRD15) from Homo sapiens (Human).